The chain runs to 527 residues: Catalase (527 aa).

Basic and acidic residues predominate over residues 1–22; that stretch reads MADSRDPASDQMKQWKEQRAPQ. The interval 1–34 is disordered; it reads MADSRDPASDQMKQWKEQRAPQKPDVLTTGGGNP. Alanine 2 is modified (N-acetylalanine). Position 9 is a phosphoserine (serine 9). Lysine 13 carries the N6-succinyllysine modification. Residues histidine 75 and asparagine 148 contribute to the active site. The NADP(+) site is built by histidine 194, serine 201, arginine 203, and asparagine 213. An N6-succinyllysine modification is found at lysine 221. Position 233 is an N6-acetyllysine (lysine 233). NADP(+) contacts are provided by lysine 237, tryptophan 303, histidine 305, and lysine 306. N6-acetyllysine; alternate is present on lysine 306. The residue at position 306 (lysine 306) is an N6-succinyllysine; alternate. Residue tyrosine 358 participates in heme binding. Phosphoserine is present on residues serine 417 and serine 434. An N6-acetyllysine; alternate mark is found at lysine 449 and lysine 480. 2 positions are modified to N6-succinyllysine; alternate: lysine 449 and lysine 480. Threonine 511 is subject to Phosphothreonine. Residue serine 517 is modified to Phosphoserine. Lysine 522 is subject to N6-succinyllysine. A Microbody targeting signal; atypical motif is present at residues 524 to 527; it reads KANL.

The protein belongs to the catalase family. In terms of assembly, homotetramer. Interacts (via microbody targeting signal) with PEX5, monomeric form interacts with PEX5, leading to its translocation into peroxisomes. The cofactor is heme. NADP(+) serves as cofactor. As to expression, expressed in renal proximal tubules (at protein level).

The protein localises to the peroxisome matrix. The enzyme catalyses 2 H2O2 = O2 + 2 H2O. Its function is as follows. Catalyzes the degradation of hydrogen peroxide (H(2)O(2)) generated by peroxisomal oxidases to water and oxygen, thereby protecting cells from the toxic effects of hydrogen peroxide. Promotes growth of cells including T-cells, B-cells, myeloid leukemia cells, melanoma cells, mastocytoma cells and normal and transformed fibroblast cells. The protein is Catalase (Cat) of Rattus norvegicus (Rat).